Consider the following 64-residue polypeptide: Conotoxin reg3k (64 aa).

The N-terminal stretch at Met-1–Ala-20 is a signal peptide. A propeptide spanning residues Leu-21–Arg-48 is cleaved from the precursor. Intrachain disulfides connect Cys-50–Cys-60, Cys-51–Cys-58, and Cys-56–Cys-61. At Pro-59 the chain carries 4-hydroxyproline.

Expressed by the venom duct.

The protein localises to the secreted. This is Conotoxin reg3k from Conus regius (Crown cone).